Consider the following 326-residue polypeptide: Flap endonuclease 1 (326 aa).

Positions 1-98 (MGVQFGDFIP…KTRKVRREMK (98 aa)) are N-domain. Mg(2+) contacts are provided by D27, D80, E152, E154, D173, D175, and D224. Residues 116–245 (EAAKYAKRVS…KRAYELVRSG (130 aa)) are I-domain. The tract at residues 317–325 (KQKTLDAWF) is interaction with PCNA.

Belongs to the XPG/RAD2 endonuclease family. FEN1 subfamily. Interacts with PCNA. PCNA stimulates the nuclease activity without altering cleavage specificity. Mg(2+) serves as cofactor.

Structure-specific nuclease with 5'-flap endonuclease and 5'-3' exonuclease activities involved in DNA replication and repair. During DNA replication, cleaves the 5'-overhanging flap structure that is generated by displacement synthesis when DNA polymerase encounters the 5'-end of a downstream Okazaki fragment. Binds the unpaired 3'-DNA end and kinks the DNA to facilitate 5' cleavage specificity. Cleaves one nucleotide into the double-stranded DNA from the junction in flap DNA, leaving a nick for ligation. Also involved in the base excision repair (BER) pathway. Acts as a genome stabilization factor that prevents flaps from equilibrating into structures that lead to duplications and deletions. Also possesses 5'-3' exonuclease activity on nicked or gapped double-stranded DNA. The sequence is that of Flap endonuclease 1 from Methanocaldococcus jannaschii (strain ATCC 43067 / DSM 2661 / JAL-1 / JCM 10045 / NBRC 100440) (Methanococcus jannaschii).